Here is a 453-residue protein sequence, read N- to C-terminus: uncharacterized protein (453 aa).

Disordered regions lie at residues 183–210 and 428–453; these read GNGR…RSLS and PDSM…QYSK. The segment covering 198–207 has biased composition (basic residues); it reads TKAHNYKTRR. Residues 433 to 453 are compositionally biased toward polar residues; that stretch reads HPPTFSKNNTSSNPKSHQYSK.

This is an uncharacterized protein from Saccharomyces cerevisiae (strain ATCC 204508 / S288c) (Baker's yeast).